Reading from the N-terminus, the 423-residue chain is Imidazolonepropionase (423 aa).

Histidine 78 and histidine 80 together coordinate Fe(3+). 2 residues coordinate Zn(2+): histidine 78 and histidine 80. Arginine 87, tyrosine 150, and histidine 183 together coordinate 4-imidazolone-5-propanoate. Tyrosine 150 is a binding site for N-formimidoyl-L-glutamate. Histidine 247 lines the Fe(3+) pocket. Histidine 247 contacts Zn(2+). A 4-imidazolone-5-propanoate-binding site is contributed by glutamate 250. Aspartate 322 contacts Fe(3+). Aspartate 322 is a binding site for Zn(2+). N-formimidoyl-L-glutamate is bound by residues asparagine 324 and glycine 326. Serine 327 is a 4-imidazolone-5-propanoate binding site.

The protein belongs to the metallo-dependent hydrolases superfamily. HutI family. Requires Zn(2+) as cofactor. The cofactor is Fe(3+).

Its subcellular location is the cytoplasm. It catalyses the reaction 4-imidazolone-5-propanoate + H2O = N-formimidoyl-L-glutamate. The protein operates within amino-acid degradation; L-histidine degradation into L-glutamate; N-formimidoyl-L-glutamate from L-histidine: step 3/3. Catalyzes the hydrolytic cleavage of the carbon-nitrogen bond in imidazolone-5-propanoate to yield N-formimidoyl-L-glutamate. It is the third step in the universal histidine degradation pathway. The protein is Imidazolonepropionase of Bacillus cereus (strain ATCC 10987 / NRS 248).